Here is a 285-residue protein sequence, read N- to C-terminus: Bifunctional protein FolD (285 aa).

NADP(+)-binding positions include 165–167 (GRS) and Ser-190.

It belongs to the tetrahydrofolate dehydrogenase/cyclohydrolase family. As to quaternary structure, homodimer.

The enzyme catalyses (6R)-5,10-methylene-5,6,7,8-tetrahydrofolate + NADP(+) = (6R)-5,10-methenyltetrahydrofolate + NADPH. It carries out the reaction (6R)-5,10-methenyltetrahydrofolate + H2O = (6R)-10-formyltetrahydrofolate + H(+). The protein operates within one-carbon metabolism; tetrahydrofolate interconversion. Its function is as follows. Catalyzes the oxidation of 5,10-methylenetetrahydrofolate to 5,10-methenyltetrahydrofolate and then the hydrolysis of 5,10-methenyltetrahydrofolate to 10-formyltetrahydrofolate. The chain is Bifunctional protein FolD from Staphylococcus haemolyticus (strain JCSC1435).